A 415-amino-acid polypeptide reads, in one-letter code: MNALRAIDFKRDDPNNVSVSVLDQLLLPYTTKYIPIYTIDDGFTVIKKMQVRGAPAIAIVGALSVLMESQLLLSEGFCKTQYYYNLNDWENIRSKIDERLAFLLSSRPTAINLSNALDEIKIVLDSASDLQTFKNNLFDYVCKLIDDDFANNKRMGDNGAEFLLNLLKKENFNEDFAVFTICNTGSLATSGYGTALGVIRSLWNDSKSKTQEGNPNKKVKLTESSPKMVQVFPLETRPYNQGSRLTAYELVHDDIPATLIPDSSIAYKIMTSKIPIKAAFVGADRIVRNGDTANKIGTLQLAIICKQFGIKFFVVAPRTTIDKVTEEGKDIIVEERNANEFKIVTGSAVDMQTNKPILDEKNEPITAKVGIAPENINVWNPAFDITSFEYIDGIVTEVGVFTKNENGNFDLSALH.

Catalysis depends on Asp284, which acts as the Proton donor.

This sequence belongs to the eIF-2B alpha/beta/delta subunits family. MtnA subfamily.

It is found in the cytoplasm. It localises to the nucleus. It catalyses the reaction 5-(methylsulfanyl)-alpha-D-ribose 1-phosphate = 5-(methylsulfanyl)-D-ribulose 1-phosphate. The protein operates within amino-acid biosynthesis; L-methionine biosynthesis via salvage pathway; L-methionine from S-methyl-5-thio-alpha-D-ribose 1-phosphate: step 1/6. Its function is as follows. Catalyzes the interconversion of methylthioribose-1-phosphate (MTR-1-P) into methylthioribulose-1-phosphate (MTRu-1-P). This Candida glabrata (strain ATCC 2001 / BCRC 20586 / JCM 3761 / NBRC 0622 / NRRL Y-65 / CBS 138) (Yeast) protein is Methylthioribose-1-phosphate isomerase.